Reading from the N-terminus, the 113-residue chain is Iron-sulfur cluster insertion protein ErpA (113 aa).

C41, C105, and C107 together coordinate iron-sulfur cluster.

The protein belongs to the HesB/IscA family. In terms of assembly, homodimer. The cofactor is iron-sulfur cluster.

Functionally, required for insertion of 4Fe-4S clusters for at least IspG. This chain is Iron-sulfur cluster insertion protein ErpA, found in Aliivibrio fischeri (strain ATCC 700601 / ES114) (Vibrio fischeri).